The following is a 261-amino-acid chain: Kallikrein-2 (261 aa).

An N-terminal signal peptide occupies residues 1-18 (MWDLVLSIALSVGCTGAV). Residues 19–24 (PLIQSR) constitute a propeptide, activation peptide. One can recognise a Peptidase S1 domain in the interval 25–258 (IVGGWECEKH…YRKWIKDTIA (234 aa)). Disulfide bonds link Cys-31-Cys-173, Cys-50-Cys-66, Cys-152-Cys-219, Cys-184-Cys-198, and Cys-209-Cys-234. The active-site Charge relay system is His-65. N-linked (GlcNAc...) asparagine glycosylation occurs at Asn-102. The active-site Charge relay system is Asp-120. The Charge relay system role is filled by Ser-213.

It belongs to the peptidase S1 family. Kallikrein subfamily.

The catalysed reaction is Preferential cleavage of Arg-|-Xaa bonds in small molecule substrates. Highly selective action to release kallidin (lysyl-bradykinin) from kininogen involves hydrolysis of Met-|-Xaa or Leu-|-Xaa.. In terms of biological role, glandular kallikreins cleave Met-Lys and Arg-Ser bonds in kininogen to release Lys-bradykinin. In Homo sapiens (Human), this protein is Kallikrein-2 (KLK2).